A 96-amino-acid chain; its full sequence is Large ribosomal subunit protein eL21 (96 aa).

Belongs to the eukaryotic ribosomal protein eL21 family.

This chain is Large ribosomal subunit protein eL21, found in Methanosphaerula palustris (strain ATCC BAA-1556 / DSM 19958 / E1-9c).